A 150-amino-acid chain; its full sequence is Cytochrome c oxidase subunit 5A, mitochondrial (150 aa).

The N-terminal 41 residues, 1-41 (MLGAALRRCAVAATTRAGPRGLLHSARTPGPAAAIQSVRCY), are a transit peptide targeting the mitochondrion. An SIFI-degron motif is present at residues 2–17 (LGAALRRCAVAATTRA). N6-acetyllysine occurs at positions 87 and 113. At T141 the chain carries Phosphothreonine.

It belongs to the cytochrome c oxidase subunit 5A family. In terms of assembly, component of the cytochrome c oxidase (complex IV, CIV), a multisubunit enzyme composed of 14 subunits. The complex is composed of a catalytic core of 3 subunits MT-CO1, MT-CO2 and MT-CO3, encoded in the mitochondrial DNA, and 11 supernumerary subunits COX4I, COX5A, COX5B, COX6A, COX6B, COX6C, COX7A, COX7B, COX7C, COX8 and NDUFA4, which are encoded in the nuclear genome. The complex exists as a monomer or a dimer and forms supercomplexes (SCs) in the inner mitochondrial membrane with NADH-ubiquinone oxidoreductase (complex I, CI) and ubiquinol-cytochrome c oxidoreductase (cytochrome b-c1 complex, complex III, CIII), resulting in different assemblies (supercomplex SCI(1)III(2)IV(1) and megacomplex MCI(2)III(2)IV(2)). Interacts with AFG1L. Interacts with RAB5IF. In terms of processing, in response to mitochondrial stress, the precursor protein is ubiquitinated by the SIFI complex in the cytoplasm before mitochondrial import, leading to its degradation. Within the SIFI complex, UBR4 initiates ubiquitin chain that are further elongated or branched by KCMF1.

Its subcellular location is the mitochondrion inner membrane. It functions in the pathway energy metabolism; oxidative phosphorylation. In terms of biological role, component of the cytochrome c oxidase, the last enzyme in the mitochondrial electron transport chain which drives oxidative phosphorylation. The respiratory chain contains 3 multisubunit complexes succinate dehydrogenase (complex II, CII), ubiquinol-cytochrome c oxidoreductase (cytochrome b-c1 complex, complex III, CIII) and cytochrome c oxidase (complex IV, CIV), that cooperate to transfer electrons derived from NADH and succinate to molecular oxygen, creating an electrochemical gradient over the inner membrane that drives transmembrane transport and the ATP synthase. Cytochrome c oxidase is the component of the respiratory chain that catalyzes the reduction of oxygen to water. Electrons originating from reduced cytochrome c in the intermembrane space (IMS) are transferred via the dinuclear copper A center (CU(A)) of subunit 2 and heme A of subunit 1 to the active site in subunit 1, a binuclear center (BNC) formed by heme A3 and copper B (CU(B)). The BNC reduces molecular oxygen to 2 water molecules using 4 electrons from cytochrome c in the IMS and 4 protons from the mitochondrial matrix. The sequence is that of Cytochrome c oxidase subunit 5A, mitochondrial (COX5A) from Gorilla gorilla gorilla (Western lowland gorilla).